We begin with the raw amino-acid sequence, 167 residues long: SsrA-binding protein (167 aa).

Residues 139-158 are compositionally biased toward basic and acidic residues; it reads QNHDKRDAAKERDWQRDKQR. Residues 139–167 are disordered; that stretch reads QNHDKRDAAKERDWQRDKQRVMRRHNRDA.

This sequence belongs to the SmpB family.

Its subcellular location is the cytoplasm. Required for rescue of stalled ribosomes mediated by trans-translation. Binds to transfer-messenger RNA (tmRNA), required for stable association of tmRNA with ribosomes. tmRNA and SmpB together mimic tRNA shape, replacing the anticodon stem-loop with SmpB. tmRNA is encoded by the ssrA gene; the 2 termini fold to resemble tRNA(Ala) and it encodes a 'tag peptide', a short internal open reading frame. During trans-translation Ala-aminoacylated tmRNA acts like a tRNA, entering the A-site of stalled ribosomes, displacing the stalled mRNA. The ribosome then switches to translate the ORF on the tmRNA; the nascent peptide is terminated with the 'tag peptide' encoded by the tmRNA and targeted for degradation. The ribosome is freed to recommence translation, which seems to be the essential function of trans-translation. The polypeptide is SsrA-binding protein (Xanthomonas oryzae pv. oryzae (strain PXO99A)).